A 427-amino-acid polypeptide reads, in one-letter code: Glutamate-1-semialdehyde 2,1-aminomutase (427 aa).

Lys-264 bears the N6-(pyridoxal phosphate)lysine mark.

The protein belongs to the class-III pyridoxal-phosphate-dependent aminotransferase family. HemL subfamily. As to quaternary structure, homodimer. It depends on pyridoxal 5'-phosphate as a cofactor.

The protein localises to the cytoplasm. The enzyme catalyses (S)-4-amino-5-oxopentanoate = 5-aminolevulinate. The protein operates within porphyrin-containing compound metabolism; protoporphyrin-IX biosynthesis; 5-aminolevulinate from L-glutamyl-tRNA(Glu): step 2/2. The chain is Glutamate-1-semialdehyde 2,1-aminomutase from Clostridium botulinum (strain Alaska E43 / Type E3).